A 287-amino-acid chain; its full sequence is Protein REVEILLE 2 (287 aa).

One can recognise an HTH myb-type domain in the interval 31–85 (TITKQREKWTEAEHEKFVEALKLYGRAWRRIEEHVGTKTAVQIRSHAQKFFTKVA). A DNA-binding region (H-T-H motif) is located at residues 58–81 (WRRIEEHVGTKTAVQIRSHAQKFF). A disordered region spans residues 134–177 (QDEDNRSPTSVLSAHGSDGLGSIGSNSPNSSSAELSSHTEESLS). Residues 156–169 (IGSNSPNSSSAELS) show a composition bias toward low complexity.

Its subcellular location is the nucleus. Its function is as follows. Positive regulator for cold-responsive gene expression and cold tolerance. Part of a regulatory feedback loop that controls a subset of the circadian outputs and modulates the central oscillator. Negatively self-regulates its own expression. This chain is Protein REVEILLE 2 (RVE2), found in Arabidopsis thaliana (Mouse-ear cress).